Consider the following 537-residue polypeptide: Zinc finger protein 703 (537 aa).

3 disordered regions span residues 1–38 (MNCSPPGSSTDTERQSSSSGTPVAPRPTLAPTHPLRQA), 90–254 (SQIG…VAPV), and 300–323 (VGNQLPGTLGLPGKPPSSSPLTGA). Positions 101–111 (SKLNSVTSSGL) are enriched in polar residues. Positions 149–158 (GSSSGGAADK) are enriched in low complexity. Over residues 176–185 (SPSSRVSSPG) the composition is skewed to polar residues. The span at 188 to 203 (CDSKNNESQEKKEPEA) shows a compositional bias: basic and acidic residues. The span at 205 to 220 (KANSETSQVNPTLTRA) shows a compositional bias: polar residues. The segment covering 221–232 (STSNSSAESSQS) has biased composition (low complexity). The C2H2-type zinc finger occupies 409-437 (HICNWVSASGPCDKRFSTSEELLAHLRTH).

Belongs to the Elbow/Noc family.

The protein resides in the nucleus. Its subcellular location is the cytoplasm. Functionally, transcriptional corepressor which does not bind directly to DNA and may regulate transcription through recruitment of histone deacetylases to gene promoters. Regulates cell adhesion, migration and proliferation. Involved in specification of the lateral neural plate border (NPB). May be required for segmental gene expression during hindbrain development. In Xenopus tropicalis (Western clawed frog), this protein is Zinc finger protein 703 (znf703).